Reading from the N-terminus, the 1358-residue chain is Indole-3-acetaldehyde oxidase (1358 aa).

The region spanning 11–98 is the 2Fe-2S ferredoxin-type domain; that stretch reads STVVLAVNGK…RCSVTTSEGI (88 aa). The [2Fe-2S] cluster site is built by Cys50, Cys55, and Cys58. Residues 241-419 form the FAD-binding PCMH-type domain; the sequence is IAASGDGWYH…LSIFIPEWGS (179 aa). The tract at residues 532 to 559 is disordered; it reads SSAPSNIDTPNGSYTHETGSNVDSPERH. The segment covering 537–554 has biased composition (polar residues); the sequence is NIDTPNGSYTHETGSNVD.

Belongs to the xanthine dehydrogenase family. Aldehyde oxidases (AO) are homodimers and heterodimers of AO subunits. The cofactor is [2Fe-2S] cluster. Requires FAD as cofactor. Mo-molybdopterin serves as cofactor. In terms of tissue distribution, mostly expressed in roots, and, to a lower extent, in mesocotyl, leaves and coleoptile. Accumulates in apical region of maize coleoptiles (at protein level).

It localises to the cytoplasm. The enzyme catalyses indole-3-acetaldehyde + O2 + H2O = (indol-3-yl)acetate + H2O2 + H(+). Its activity is regulated as follows. Inhibited by 2-mercaptoethanol, p-chloromercuribenzoate, and iodoacetate. Its function is as follows. In higher plants aldehyde oxidases (AO) appear to be homo- and heterodimeric assemblies of AO subunits with probably different physiological functions. Involved in the biosynthesis of auxin from (indol-3-yl)acetaldehyde. Can also use indole-3-aldehyde and benzaldehyde as substrate. This is Indole-3-acetaldehyde oxidase (AO1) from Zea mays (Maize).